Consider the following 483-residue polypeptide: Pre-glycoprotein polyprotein GP complex (483 aa).

Gly2 carries N-myristoyl glycine; by host lipidation. Residues 2–17 lie on the Extracellular side of the membrane; sequence GQFISFMQEIPIFLQE. The helical transmembrane segment at 18-32 threads the bilayer; the sequence is ALNIALVAVSLICIV. Position 33 (Lys33) is a topological domain, cytoplasmic. Residues 34–53 traverse the membrane as a helical segment; it reads GLVNLYRCGLFQLMVFLVLA. 2 consecutive stretches face the extracellular side: residues 54–58 and 59–422; these read GRSCS and EETF…TLVD. Position 57 (Cys57) interacts with Zn(2+). 2 N-linked (GlcNAc...) asparagine; by host glycosylation sites follow: Asn83 and Asn95. Intrachain disulfides connect Cys92-Cys224, Cys134-Cys162, Cys205-Cys211, Cys269-Cys282, Cys291-Cys300, and Cys354-Cys375. N-linked (GlcNAc...) asparagine; by host glycosylation is found at Asn164 and Asn176. N-linked (GlcNAc...) asparagine; by host glycans are attached at residues Asn355, Asn363, Asn380, and Asn385. Residues 423–443 form a helical membrane-spanning segment; it reads ICFWSTVFFTSTLFLHLIGFP. Residues 444 to 483 lie on the Cytoplasmic side of the membrane; it reads THEHIRGEGCPLPHRLNSMGGCRCGKYLPLKKPTIWHRRH. The Zn(2+) site is built by His445, His447, Cys453, His457, Cys465, Cys467, and His483.

This sequence belongs to the arenaviridae GPC protein family. In terms of assembly, homotetramer; disulfide-linked. Homotetramer. GP2 homotetramers bind through ionic interactions with GP1 homotetramers to form the GP complex together with the stable signal peptide. The GP-C polyprotein interacts with the host protease MBTPS1/SKI-1 resulting in the polyprotein processing. Specific enzymatic cleavages in vivo yield mature proteins. GP-C polyprotein is cleaved in the endoplasmic reticulum by the host protease MBTPS1. Only cleaved glycoprotein is incorporated into virions. In terms of processing, the SSP remains stably associated with the GP complex following cleavage by signal peptidase and plays crucial roles in the trafficking of GP through the secretory pathway. Post-translationally, myristoylation is necessary for GP2-mediated fusion activity.

It is found in the virion membrane. The protein resides in the host endoplasmic reticulum membrane. The protein localises to the host Golgi apparatus membrane. It localises to the host cell membrane. Functionally, class I viral fusion protein that directs fusion of viral and host endosomal membranes, leading to delivery of the nucleocapsid into the cytoplasm. Membrane fusion is mediated by irreversible conformational changes induced upon acidification in the endosome. Its function is as follows. Stable signal peptide (SSP): cleaved and functions as a signal peptide. In addition, it is also retained as the third component of the GP complex. The SSP is required for efficient glycoprotein expression, post-translational maturation cleavage of GP1 and GP2, glycoprotein transport to the cell surface plasma membrane, formation of infectious virus particles, and acid pH-dependent glycoprotein-mediated cell fusion. In terms of biological role, interacts with the host receptor. This chain is Pre-glycoprotein polyprotein GP complex, found in Artibeus (neotropical fruit bats).